The following is a 623-amino-acid chain: uncharacterized protein (623 aa).

The segment covering 1-18 has biased composition (polar residues); it reads MSSRSGSADTFTQRSDSN. 7 disordered regions span residues 1 to 107, 132 to 181, 207 to 231, 298 to 349, 384 to 464, 533 to 553, and 568 to 623; these read MSSR…DPFT, LGSD…EIGA, SWNL…ADTD, REET…ESDQ, RKSV…DRNV, SIND…PPET, and VESR…TKGD. A compositionally biased stretch (basic and acidic residues) spans 25-34; it reads ISLDDVRDNN. The span at 39-49 shows a compositional bias: low complexity; sequence SSSGISTTGSS. Polar residues predominate over residues 132–144; it reads LGSDTARPTSNGG. Low complexity predominate over residues 165-177; it reads STSTWGPSGPTTP. Positions 328 to 339 are enriched in polar residues; that stretch reads EKSTFSRISEQP. Positions 400–417 are enriched in low complexity; that stretch reads QTPTISTASSPIQPSSSP. A compositionally biased stretch (polar residues) spans 533 to 548; sequence SINDLQQGTSSSQNQA. Residues 604 to 614 show a composition bias toward low complexity; sequence PSASPSTSRTR.

This is an uncharacterized protein from Emericella nidulans (strain FGSC A4 / ATCC 38163 / CBS 112.46 / NRRL 194 / M139) (Aspergillus nidulans).